We begin with the raw amino-acid sequence, 136 residues long: Phosphoribosyl-AMP cyclohydrolase (136 aa).

A Mg(2+)-binding site is contributed by Asp92. Cys93 contacts Zn(2+). Mg(2+) is bound by residues Asp94 and Asp96. Residues Cys109 and Cys116 each contribute to the Zn(2+) site.

It belongs to the PRA-CH family. As to quaternary structure, homodimer. Mg(2+) is required as a cofactor. Zn(2+) serves as cofactor.

It localises to the cytoplasm. The catalysed reaction is 1-(5-phospho-beta-D-ribosyl)-5'-AMP + H2O = 1-(5-phospho-beta-D-ribosyl)-5-[(5-phospho-beta-D-ribosylamino)methylideneamino]imidazole-4-carboxamide. The protein operates within amino-acid biosynthesis; L-histidine biosynthesis; L-histidine from 5-phospho-alpha-D-ribose 1-diphosphate: step 3/9. Reversibly inhibited by EDTA and free zinc ions. Enzyme is inactivated by dialysis against 1,10-phenanthroline, which is a zinc specific chelator. Its function is as follows. Catalyzes the hydrolysis of the adenine ring of phosphoribosyl-AMP. This is Phosphoribosyl-AMP cyclohydrolase from Methanococcus vannielii.